Reading from the N-terminus, the 1106-residue chain is Protein transport protein Sec31A (1106 aa).

WD repeat units lie at residues 4–47, 68–111, 120–160, 166–206, 209–254, 258–298, and 301–342; these read KEVD…EIFE, RYHK…AGDK, KHTG…TPMT, QPPE…PIIK, DHSN…SPLR, NHAR…VLYE, and TNTQ…DGLR. Residues 161–471 form an interaction with SEC13 region; it reads PGAKTQPPED…IDASQTEFEK (311 aa). One copy of the WD 8; interaction with SEC13 repeat lies at 397-430; the sequence is SFSFGGKLVTFENVRMPSHQGAEQQQQQHHVFIS. A phosphoserine mark is found at S527 and S532. K647 participates in a covalent cross-link: Glycyl lysine isopeptide (Lys-Gly) (interchain with G-Cter in ubiquitin). Position 799 is a phosphoserine (S799). The interaction with PDCD6 stretch occupies residues 800 to 999; sequence PKIPYEEQQL…TKKITKKPIP (200 aa). The ALG-2-binding site motif-2 (ABS-2) signature appears at 842–848; sequence GFIMHGN. The disordered stretch occupies residues 859–980; it reads TSPGHMHTQV…EGAPGAPIGN (122 aa). Over residues 917-939 the composition is skewed to polar residues; sequence PQSQMLQQQPSAPVPLSSQSSFP. T1047 carries the phosphothreonine modification. Phosphoserine is present on S1049. Residue K1103 forms a Glycyl lysine isopeptide (Lys-Gly) (interchain with G-Cter in ubiquitin) linkage.

Belongs to the WD repeat SEC31 family. COPII is composed of at least 5 proteins: the SEC23/24 complex, the SEC13/31 complex and SAR1. SEC13 and SEC31 make a 2:2 tetramer that forms the edge element of the COPII outer coat. The tetramer self-assembles in multiple copies to form the complete polyhedral cage. Interacts (via WD 8) with SEC13. Interacts with PDCD6; interaction takes place in response to cytosolic calcium increase and leads to bridge together the BCR(KLHL12) complex and SEC31A, leading to monoubiquitination. Interacts with KLHL12. In terms of processing, monoubiquitinated by the BCR(KLHL12) E3 ubiquitin ligase complex, leading to regulate the size of COPII coats.

The protein localises to the cytoplasm. It localises to the cytoplasmic vesicle. Its subcellular location is the COPII-coated vesicle membrane. It is found in the endoplasmic reticulum membrane. In terms of biological role, component of the coat protein complex II (COPII) which promotes the formation of transport vesicles from the endoplasmic reticulum (ER). The coat has two main functions, the physical deformation of the endoplasmic reticulum membrane into vesicles and the selection of cargo molecules. This Pongo abelii (Sumatran orangutan) protein is Protein transport protein Sec31A (SEC31A).